The chain runs to 512 residues: D-alanine--D-alanyl carrier protein ligase (512 aa).

152–153 (TS) contributes to the ATP binding site. A D-alanine-binding site is contributed by D199. ATP is bound at residue 294–299 (NAYGPT). D-alanine is bound at residue V303. ATP-binding positions include D385, 397-400 (YGGR), and K499. D-alanine is bound at residue K499.

The protein belongs to the ATP-dependent AMP-binding enzyme family. DltA subfamily.

It localises to the cytoplasm. The catalysed reaction is holo-[D-alanyl-carrier protein] + D-alanine + ATP = D-alanyl-[D-alanyl-carrier protein] + AMP + diphosphate. Its pathway is cell wall biogenesis; lipoteichoic acid biosynthesis. Catalyzes the first step in the D-alanylation of lipoteichoic acid (LTA), the activation of D-alanine and its transfer onto the D-alanyl carrier protein (Dcp) DltC. In an ATP-dependent two-step reaction, forms a high energy D-alanyl-AMP intermediate, followed by transfer of the D-alanyl residue as a thiol ester to the phosphopantheinyl prosthetic group of the Dcp. D-alanylation of LTA plays an important role in modulating the properties of the cell wall in Gram-positive bacteria, influencing the net charge of the cell wall. The chain is D-alanine--D-alanyl carrier protein ligase from Streptococcus pyogenes serotype M49 (strain NZ131).